We begin with the raw amino-acid sequence, 135 residues long: Thioredoxin H5 (135 aa).

Positions 13 to 128 (EHLDYSGGNV…LQEKFEQLNR (116 aa)) constitute a Thioredoxin domain. Active-site nucleophile residues include C54 and C57. C54 and C57 are oxidised to a cystine.

Belongs to the thioredoxin family. Plant H-type subfamily.

The protein resides in the cytoplasm. In terms of biological role, probable thiol-disulfide oxidoreductase that may be involved in the redox regulation of a number of cytosolic enzymes. In Oryza sativa subsp. japonica (Rice), this protein is Thioredoxin H5.